Reading from the N-terminus, the 366-residue chain is Variable large protein 10 (366 aa).

Positions 1-18 (MRKRISAIIMTLFMVLAS) are cleaved as a signal peptide. The N-palmitoyl cysteine moiety is linked to residue Cys-19. Cys-19 carries S-diacylglycerol cysteine lipidation.

It belongs to the variable large protein (Vlp) family. Beta subfamily.

Its subcellular location is the cell outer membrane. Its function is as follows. The Vlp and Vsp proteins are antigenically distinct proteins, only one vlp or vsp gene is transcriptionally active at any one time. Switching between these genes is a mechanism of host immune response evasion. The sequence is that of Variable large protein 10 from Borrelia hermsii.